A 124-amino-acid chain; its full sequence is Small ribosomal subunit protein uS13 (124 aa).

The tract at residues G95–K124 is disordered.

Belongs to the universal ribosomal protein uS13 family. In terms of assembly, part of the 30S ribosomal subunit. Forms a loose heterodimer with protein S19. Forms two bridges to the 50S subunit in the 70S ribosome.

In terms of biological role, located at the top of the head of the 30S subunit, it contacts several helices of the 16S rRNA. In the 70S ribosome it contacts the 23S rRNA (bridge B1a) and protein L5 of the 50S subunit (bridge B1b), connecting the 2 subunits; these bridges are implicated in subunit movement. Contacts the tRNAs in the A and P-sites. In Rhodococcus jostii (strain RHA1), this protein is Small ribosomal subunit protein uS13.